Reading from the N-terminus, the 290-residue chain is Pyridoxal kinase PdxY (290 aa).

Residues Ser12 and 47–48 (TQ) contribute to the substrate site. ATP contacts are provided by residues Asp114, Glu151, Lys184, and 211–214 (RPLL). Asp225 provides a ligand contact to substrate.

It belongs to the pyridoxine kinase family. PdxY subfamily. As to quaternary structure, homodimer. It depends on Mg(2+) as a cofactor.

It carries out the reaction pyridoxal + ATP = pyridoxal 5'-phosphate + ADP + H(+). Its pathway is cofactor metabolism; pyridoxal 5'-phosphate salvage; pyridoxal 5'-phosphate from pyridoxal: step 1/1. Pyridoxal kinase involved in the salvage pathway of pyridoxal 5'-phosphate (PLP). Catalyzes the phosphorylation of pyridoxal to PLP. This Pseudomonas putida (strain GB-1) protein is Pyridoxal kinase PdxY.